Reading from the N-terminus, the 739-residue chain is MICOS complex subunit Mic60 (739 aa).

Residues 23–63 (ANNRQFGGSSSGSGGREQGRRQQEEQGQQGDQGYQGYQSLP) are disordered. Over residues 47–61 (EQGQQGDQGYQGYQS) the composition is skewed to low complexity. A helical membrane pass occupies residues 69–89 (AGFGKVVLFVSPLAAVGGVIT). Residues 154–219 (VTGLFGGGSG…PAAKPKDNPL (66 aa)) are disordered. Residues 163–198 (GDDKSKKSKVEPVKATPAEEKRPSKPSEVSKTEAKP) are compositionally biased toward basic and acidic residues. Positions 199–212 (VSKPAAAAAPAPAA) are enriched in low complexity. The stretch at 283 to 339 (TAVATAERAAREAQEKIVACEIALSAAATAQNAKKVEAVRDKIKKLVDHIGNVKDEL) forms a coiled coil.

Belongs to the MICOS complex subunit Mic60 family. As to quaternary structure, component of the mitochondrial contact site and cristae organizing system (MICOS) complex. Interacts with the mitochondria-shaping protein Opa1.

The protein resides in the mitochondrion inner membrane. Component of the MICOS complex, a large protein complex of the mitochondrial inner membrane that plays crucial roles in the maintenance of crista junctions, inner membrane architecture, and formation of contact sites to the outer membrane. The protein is MICOS complex subunit Mic60 of Drosophila melanogaster (Fruit fly).